The following is a 154-amino-acid chain: Transcriptional repressor NrdR (154 aa).

Residues 3 to 34 fold into a zinc finger; the sequence is CPYCRHPDSRVVDSREADDGQLIRRRRSCPEC. The region spanning 46–136 is the ATP-cone domain; it reads LAVVKRSGVT…VYRSFESLAD (91 aa).

Belongs to the NrdR family. Zn(2+) serves as cofactor.

In terms of biological role, negatively regulates transcription of bacterial ribonucleotide reductase nrd genes and operons by binding to NrdR-boxes. This Salinispora arenicola (strain CNS-205) protein is Transcriptional repressor NrdR.